Consider the following 735-residue polypeptide: DNA replication licensing factor mcm5-B (735 aa).

One can recognise an MCM domain in the interval 332-538 (IYETVAKSIA…RDMTLAKHVM (207 aa)). R372 lines the ADP pocket. The short motif at 513 to 516 (SRFD) is the Arginine finger element.

This sequence belongs to the MCM family. Component of the mcm2-7 complex (RLF-M). The complex forms a toroidal hexameric ring with the proposed subunit order mcm2-mcm6-mcm4-mcm7-mcm3-mcm5. The heterodimer of mmcm3/mcm5 interacts with mcm4, mmcm6, mcm7 and weakly with mcm2. Component of the CMG helicase complex, composed of the mcm2-7 complex, the GINS complex and cdc45.

Its subcellular location is the nucleus. The protein localises to the chromosome. The catalysed reaction is ATP + H2O = ADP + phosphate + H(+). Its function is as follows. Acts as a component of the MCM2-7 complex (MCM complex) which is the replicative helicase essential for 'once per cell cycle' DNA replication initiation and elongation in eukaryotic cells. Core component of CDC45-MCM-GINS (CMG) helicase, the molecular machine that unwinds template DNA during replication, and around which the replisome is built. The active ATPase sites in the MCM2-7 ring are formed through the interaction surfaces of two neighboring subunits such that a critical structure of a conserved arginine finger motif is provided in trans relative to the ATP-binding site of the Walker A box of the adjacent subunit. The six ATPase active sites, however, are likely to contribute differentially to the complex helicase activity. The protein is DNA replication licensing factor mcm5-B (mcm5-b) of Xenopus laevis (African clawed frog).